Reading from the N-terminus, the 469-residue chain is 3-isopropylmalate dehydratase large subunit (469 aa).

[4Fe-4S] cluster contacts are provided by C349, C409, and C412. The interval 424-443 (QISASSSNRNFKGRQGSPSG) is disordered.

Belongs to the aconitase/IPM isomerase family. LeuC type 1 subfamily. In terms of assembly, heterodimer of LeuC and LeuD. The cofactor is [4Fe-4S] cluster.

It carries out the reaction (2R,3S)-3-isopropylmalate = (2S)-2-isopropylmalate. It functions in the pathway amino-acid biosynthesis; L-leucine biosynthesis; L-leucine from 3-methyl-2-oxobutanoate: step 2/4. Catalyzes the isomerization between 2-isopropylmalate and 3-isopropylmalate, via the formation of 2-isopropylmaleate. The polypeptide is 3-isopropylmalate dehydratase large subunit (Thermosynechococcus vestitus (strain NIES-2133 / IAM M-273 / BP-1)).